A 146-amino-acid chain; its full sequence is SLSGAEADLLAKSWAPVFANKDANGDNFLIALFEAFPDSANFFGDFKGKSIADIRASPKLRSVSSRIVNRLNDFVGNAADAGKMAGMLDQFSKEHVGFGVGSQQFENVRSMFPGFVSSVAAPPAGADAAWGKLFGLIIDALKKAGK.

The residue at position 1 (Ser1) is an N-acetylserine. Residues 1-146 enclose the Globin domain; it reads SLSGAEADLL…IIDALKKAGK (146 aa). Residue His95 coordinates heme b.

It belongs to the globin family. Monomer.

The chain is Globin from Bursatella leachii (Ragged sea hare).